The following is a 247-amino-acid chain: MDRIKCTVAYDGMHFCGYQIQPNHRTVQQEIEKALQKLHKGELVRVQASGRTDSTVHAKGQVIHFDTPLSLEEWQWSNALNTMLPDDIVIRQVEKKTEEFHARYGVEKKEYRYRVLLSKTADVFRRNYVYQYPYPLEINSIRKAIPYFIGTHDFTSFCSAKTDKKDKVRTIYEIELIEQDDEIIFRFVGNGFLYNMVRIIVGTLLSVGQGKLDPDSIPEILAKQNRQFAGKMAPGHGLYLWEVNYNN.

Aspartate 53 acts as the Nucleophile in catalysis. Residue tyrosine 111 participates in substrate binding.

Belongs to the tRNA pseudouridine synthase TruA family. Homodimer.

The enzyme catalyses uridine(38/39/40) in tRNA = pseudouridine(38/39/40) in tRNA. Its function is as follows. Formation of pseudouridine at positions 38, 39 and 40 in the anticodon stem and loop of transfer RNAs. This Bacillus cereus (strain ATCC 14579 / DSM 31 / CCUG 7414 / JCM 2152 / NBRC 15305 / NCIMB 9373 / NCTC 2599 / NRRL B-3711) protein is tRNA pseudouridine synthase A 1.